Here is a 71-residue protein sequence, read N- to C-terminus: Small ribosomal subunit protein bS18 (71 aa).

Belongs to the bacterial ribosomal protein bS18 family. Part of the 30S ribosomal subunit. Forms a tight heterodimer with protein bS6.

Functionally, binds as a heterodimer with protein bS6 to the central domain of the 16S rRNA, where it helps stabilize the platform of the 30S subunit. In Synechocystis sp. (strain ATCC 27184 / PCC 6803 / Kazusa), this protein is Small ribosomal subunit protein bS18.